Here is a 337-residue protein sequence, read N- to C-terminus: Eukaryotic translation initiation factor 3 subunit H (337 aa).

Residues 21–153 enclose the MPN domain; it reads VQCDGLAVMK…LKAYRLTPQA (133 aa).

Belongs to the eIF-3 subunit H family. In terms of assembly, component of the eukaryotic translation initiation factor 3 (eIF-3) complex. The eIF-3 complex interacts with pix. Interacts with mxt.

The protein localises to the cytoplasm. Functionally, component of the eukaryotic translation initiation factor 3 (eIF-3) complex, which is involved in protein synthesis of a specialized repertoire of mRNAs and, together with other initiation factors, stimulates binding of mRNA and methionyl-tRNAi to the 40S ribosome. The eIF-3 complex specifically targets and initiates translation of a subset of mRNAs involved in cell proliferation. The chain is Eukaryotic translation initiation factor 3 subunit H from Drosophila virilis (Fruit fly).